We begin with the raw amino-acid sequence, 196 residues long: Putative NADH dehydrogenase/NAD(P)H nitroreductase PXO_03909 (196 aa).

Belongs to the nitroreductase family. HadB/RutE subfamily. FMN serves as cofactor.

This is Putative NADH dehydrogenase/NAD(P)H nitroreductase PXO_03909 from Xanthomonas oryzae pv. oryzae (strain PXO99A).